The following is a 209-amino-acid chain: Small ribosomal subunit protein eS1 (209 aa).

Belongs to the eukaryotic ribosomal protein eS1 family.

The polypeptide is Small ribosomal subunit protein eS1 (Picrophilus torridus (strain ATCC 700027 / DSM 9790 / JCM 10055 / NBRC 100828 / KAW 2/3)).